The primary structure comprises 345 residues: SLAM family member 5 (345 aa).

The N-terminal stretch at 1–21 (MAQHHLWILLLCLQTWPEAAG) is a signal peptide. Residues 22–225 (KDSEIFTVNG…AMGFRTHHTG (204 aa)) lie on the Extracellular side of the membrane. Positions 26–129 (IFTVNGILGE…TTKRYNLQIY (104 aa)) constitute an Ig-like V-type domain. In terms of domain architecture, Ig-like C2-type spans 135–207 (PKITQSLMAS…PVSNNSDSIS (73 aa)). The N-linked (GlcNAc...) asparagine glycan is linked to N150. A disulfide bridge links C155 with C193. Residues 226–246 (LLSVLAMFFLLVLILSSVFLF) traverse the membrane as a helical segment. The Cytoplasmic portion of the chain corresponds to 247–345 (RLFKRRQGRI…PGTSSYEIVI (99 aa)). The ITSM 1 signature appears at 277–282 (TIYTYI). At Y279 the chain carries Phosphotyrosine. Position 296 is a phosphotyrosine; by LYN (Y296). An ITSM 2 motif is present at residues 314–319 (TVYSEV). The residue at position 316 (Y316) is a Phosphotyrosine. The disordered stretch occupies residues 326 to 345 (GKASTQDSKPPGTSSYEIVI). The span at 328–345 (ASTQDSKPPGTSSYEIVI) shows a compositional bias: polar residues. The residue at position 341 (Y341) is a Phosphotyrosine; by FES.

As to quaternary structure, homodimer; via its extracellular domain. Forms a head to tail dimer with a CD48 molecule from another cell. Interacts with SH2 domain-containing proteins SH2D1A/SAP and SH2D1B/EAT-2. Interacts with tyrosine-protein phosphatases PTPN6/SHP-1 and PTPN11//SHP-2 via its phosphorylated cytoplasmic domain, and this interaction is blocked by SH2D1A. Interacts (via phosphorylated ITSM 1 and 2) with INPP5D/SHIP1. Post-translationally, phosphorylated by tyrosine-protein kinase LCK on tyrosine residues following ligation induced by agonist monoclonal antibody. The association with SH2D1A is dependent of tyrosine phosphorylation of its cytoplasmic domain. Phosphorylated on Tyr-296 and Tyr-316 following platelet aggregation. Phosphorylated on tyrosine residues upon high affinity immunoglobulin epsilon receptor aggregation in mast cells. N-glycosylated. Predominantly expressed in hematopoietic tissues, such as lymph node, spleen and peripheral leukocytes. Expressed in macrophages, B-cells, monocytes, platelets, thymocytes, T-cells and dendritic cells. Highly expressed in memory T-cells. Expressed in mast cells.

The protein localises to the cell membrane. Its function is as follows. Self-ligand receptor of the signaling lymphocytic activation molecule (SLAM) family. SLAM receptors triggered by homo- or heterotypic cell-cell interactions are modulating the activation and differentiation of a wide variety of immune cells and thus are involved in the regulation and interconnection of both innate and adaptive immune response. Activities are controlled by presence or absence of small cytoplasmic adapter proteins, SH2D1A/SAP and/or SH2D1B/EAT-2. Can mediate natural killer (NK) cell cytotoxicity dependent on SH2D1A and SH2D1B. Increases proliferative responses of activated T-cells and SH2D1A/SAP does not seem be required for this process. Homophilic interactions enhance interferon gamma/IFNG secretion in lymphocytes and induce platelet stimulation via a SH2D1A-dependent pathway. May serve as a marker for hematopoietic progenitor cells Required for a prolonged T-cell:B-cell contact, optimal T follicular helper function, and germinal center formation. In germinal centers involved in maintaining B-cell tolerance and in preventing autoimmunity. In mast cells negatively regulates high affinity immunoglobulin epsilon receptor signaling; independent of SH2D1A and SH2D1B but implicating FES and PTPN6/SHP-1. In macrophages enhances LPS-induced MAPK phosphorylation and NF-kappaB activation and modulates LPS-induced cytokine secretion; involving ITSM 2. Positively regulates macroautophagy in primary dendritic cells via stabilization of IRF8; inhibits TRIM21-mediated proteasomal degradation of IRF8. The chain is SLAM family member 5 (CD84) from Homo sapiens (Human).